Reading from the N-terminus, the 121-residue chain is uncharacterized protein (121 aa).

The tract at residues 85–111 (NANNDDYESPYKTPKIKSNPSLDSSGS) is disordered. Over residues 100–111 (IKSNPSLDSSGS) the composition is skewed to polar residues.

This is an uncharacterized protein from Dictyostelium discoideum (Social amoeba).